The primary structure comprises 458 residues: V-type ATP synthase beta chain (458 aa).

Belongs to the ATPase alpha/beta chains family.

Its function is as follows. Produces ATP from ADP in the presence of a proton gradient across the membrane. The V-type beta chain is a regulatory subunit. This is V-type ATP synthase beta chain from Fusobacterium nucleatum subsp. nucleatum (strain ATCC 25586 / DSM 15643 / BCRC 10681 / CIP 101130 / JCM 8532 / KCTC 2640 / LMG 13131 / VPI 4355).